A 60-amino-acid chain; its full sequence is Metallothionein (60 aa).

The interval 1 to 28 (MDPCDCSKTGKCNCGGSCTCTNCSCTSC) is beta. Residues Cys-4, Cys-6, Cys-12, Cys-14, Cys-18, Cys-20, Cys-23, Cys-25, Cys-28, Cys-32, Cys-33, Cys-35, Cys-36, Cys-40, Cys-43, Cys-47, Cys-49, Cys-54, Cys-58, and Cys-59 each coordinate a divalent metal cation. The tract at residues 29–60 (KKSCCACCPSGCTKCASGCVCKGKTCDTTCCQ) is alpha.

This sequence belongs to the metallothionein superfamily. Type 1 family.

Functionally, metallothioneins have a high content of cysteine residues that bind various heavy metals. This Oryzias latipes (Japanese rice fish) protein is Metallothionein (mt).